A 171-amino-acid polypeptide reads, in one-letter code: Adenine phosphoribosyltransferase (171 aa).

It belongs to the purine/pyrimidine phosphoribosyltransferase family. Homodimer.

It localises to the cytoplasm. The enzyme catalyses AMP + diphosphate = 5-phospho-alpha-D-ribose 1-diphosphate + adenine. Its pathway is purine metabolism; AMP biosynthesis via salvage pathway; AMP from adenine: step 1/1. In terms of biological role, catalyzes a salvage reaction resulting in the formation of AMP, that is energically less costly than de novo synthesis. In Geotalea uraniireducens (strain Rf4) (Geobacter uraniireducens), this protein is Adenine phosphoribosyltransferase.